We begin with the raw amino-acid sequence, 181 residues long: Cell division protein ZapC (181 aa).

Belongs to the ZapC family. Interacts directly with FtsZ.

It localises to the cytoplasm. Its function is as follows. Contributes to the efficiency of the cell division process by stabilizing the polymeric form of the cell division protein FtsZ. Acts by promoting interactions between FtsZ protofilaments and suppressing the GTPase activity of FtsZ. This is Cell division protein ZapC from Shewanella woodyi (strain ATCC 51908 / MS32).